Consider the following 220-residue polypeptide: GTP cyclohydrolase 1 (220 aa).

Zn(2+) contacts are provided by cysteine 109, histidine 112, and cysteine 180.

This sequence belongs to the GTP cyclohydrolase I family. In terms of assembly, toroid-shaped homodecamer, composed of two pentamers of five dimers.

It catalyses the reaction GTP + H2O = 7,8-dihydroneopterin 3'-triphosphate + formate + H(+). It functions in the pathway cofactor biosynthesis; 7,8-dihydroneopterin triphosphate biosynthesis; 7,8-dihydroneopterin triphosphate from GTP: step 1/1. In Yersinia pseudotuberculosis serotype O:1b (strain IP 31758), this protein is GTP cyclohydrolase 1.